We begin with the raw amino-acid sequence, 504 residues long: Lysine--tRNA ligase (504 aa).

Residues 23–31 carry the 'HIGH' region motif; the sequence is PSGPIHIGN.

The protein belongs to the class-I aminoacyl-tRNA synthetase family.

The protein localises to the cytoplasm. The catalysed reaction is tRNA(Lys) + L-lysine + ATP = L-lysyl-tRNA(Lys) + AMP + diphosphate. This is Lysine--tRNA ligase from Picrophilus torridus (strain ATCC 700027 / DSM 9790 / JCM 10055 / NBRC 100828 / KAW 2/3).